Reading from the N-terminus, the 456-residue chain is Signal transduction histidine-protein kinase ArlS (456 aa).

The next 2 helical transmembrane spans lie at 13 to 33 (LITT…IIFF) and 157 to 177 (IVAL…SYIF). The HAMP domain maps to 179–232 (SQITKPIVTMSNKMNQIRRDGFQNKLELTTNYEETDNLIDTFNEMMYQIEESFN). The region spanning 240 to 456 (DASHELRTPL…TFKISFPVLN (217 aa)) is the Histidine kinase domain. Residue histidine 243 is modified to Phosphohistidine; by autocatalysis.

Post-translationally, autophosphorylated.

The protein resides in the cell membrane. It catalyses the reaction ATP + protein L-histidine = ADP + protein N-phospho-L-histidine.. Member of the two-component regulatory system ArlS/ArlR. ArlS probably functions as a sensor protein kinase which is autophosphorylated at a histidine residue and transfers its phosphate group to ArlR. This Staphylococcus epidermidis (strain ATCC 12228 / FDA PCI 1200) protein is Signal transduction histidine-protein kinase ArlS (arlS).